The sequence spans 161 residues: Pupal cuticle protein C1B (161 aa).

Tandem repeats lie at residues 6–9 (AAPA), 14–17 (AAPA), 35–38 (AAPA), 87–90 (AAPV), 103–106 (AAPV), 112–115 (AAPV), 121–124 (AAPV), 130–133 (AAPV), and 143–146 (AAPA).

In terms of biological role, component of the cuticle of the pupa of Tenebrio molitor. The polypeptide is Pupal cuticle protein C1B (Tenebrio molitor (Yellow mealworm beetle)).